The primary structure comprises 240 residues: uncharacterized protein (240 aa).

This is an uncharacterized protein from Thermotoga maritima (strain ATCC 43589 / DSM 3109 / JCM 10099 / NBRC 100826 / MSB8).